The primary structure comprises 50 residues: Large ribosomal subunit protein bL33 (50 aa).

It belongs to the bacterial ribosomal protein bL33 family.

The protein is Large ribosomal subunit protein bL33 of Solibacter usitatus (strain Ellin6076).